A 1013-amino-acid chain; its full sequence is Poly [ADP-ribose] polymerase 1 (1013 aa).

An N-acetylalanine modification is found at Ala2. The segment at 9-93 adopts a PARP-type 1 zinc-finger fold; the sequence is YRVEYAKSGR…KVKKTAEAGG (85 aa). Residues Cys21 and Cys24 each contribute to the Zn(2+) site. Ser41 bears the Phosphoserine mark. Zn(2+)-binding residues include His53 and Cys56. N6-acetyllysine occurs at positions 97 and 105. The segment at 113-203 adopts a PARP-type 2 zinc-finger fold; sequence FAAEYAKSNR…VLKKQLPGVK (91 aa). Cys125 and Cys128 together coordinate Zn(2+). Residue Lys131 is modified to N6-acetyllysine. Positions 159 and 162 each coordinate Zn(2+). Phosphoserine is present on residues Ser177, Ser179, and Ser185. A Glycyl lysine isopeptide (Lys-Gly) (interchain with G-Cter in SUMO2) cross-link involves residue Lys192. The segment at 198-233 is disordered; the sequence is QLPGVKSEGKRKGDEVDGADEVAKKKSKKGKDKDSK. Lys203 participates in a covalent cross-link: Glycyl lysine isopeptide (Lys-Gly) (interchain with G-Cter in SUMO1); alternate. Lys203 is covalently cross-linked (Glycyl lysine isopeptide (Lys-Gly) (interchain with G-Cter in SUMO2); alternate). 2 consecutive short sequence motifs (nuclear localization signal) follow at residues 207-209 and 221-226; these read KRK and KKKSKK. The PADR1 zinc-binding domain maps to 225-359; that stretch reads KKGKDKDSKL…VKKQDRIFPP (135 aa). A Glycyl lysine isopeptide (Lys-Gly) (interchain with G-Cter in SUMO2) cross-link involves residue Lys249. 2 positions are modified to phosphoserine: Ser274 and Ser277. Residues 290 to 332 are zinc ribbon; it reads GALLPCKECSGQLVFKSDAYYCTGDVTAWTKCMVKTQTPSRKE. Residues Cys295, Cys298, Cys311, and Cys321 each coordinate Zn(2+). A disordered region spans residues 357–383; that stretch reads FPPETSAPAPPHLPPSVTSAPTAVNSS. Residues 372–383 are compositionally biased toward polar residues; it reads SVTSAPTAVNSS. Residues 373–523 form an automodification domain region; that stretch reads VTSAPTAVNS…GVNKSEKRMK (151 aa). The BRCT domain occupies 385–476; that stretch reads PADKPLSNMK…KSLQELLSAH (92 aa). Asp387 bears the PolyADP-ribosyl aspartic acid mark. 7 positions are modified to polyADP-ribosyl glutamic acid: Glu407, Glu413, Glu435, Glu437, Glu444, Glu445, and Glu456. Lys467 participates in a covalent cross-link: Glycyl lysine isopeptide (Lys-Gly) (interchain with G-Cter in SUMO2). 2 positions are modified to polyADP-ribosyl glutamic acid: Glu471 and Glu484. Residue Lys486 forms a Glycyl lysine isopeptide (Lys-Gly) (interchain with G-Cter in SUMO1); alternate linkage. Residue Lys486 forms a Glycyl lysine isopeptide (Lys-Gly) (interchain with G-Cter in SUMO2); alternate linkage. Residues Glu488 and Glu491 each carry the polyADP-ribosyl glutamic acid modification. The segment at 495 to 516 is disordered; that stretch reads PKGKSAAPSKKSKGLYKEEGVN. Residues Ser499, Ser503, and Ser506 each carry the ADP-ribosylserine modification. Residue Lys511 forms a Glycyl lysine isopeptide (Lys-Gly) (interchain with G-Cter in SUMO2) linkage. Glu512 and Glu513 each carry polyADP-ribosyl glutamic acid. At Ser518 the chain carries ADP-ribosylserine. Position 519 is a polyADP-ribosyl glutamic acid (Glu519). Lys520 is subject to N6-(ADP-ribosyl)lysine. Lys527 participates in a covalent cross-link: Glycyl lysine isopeptide (Lys-Gly) (interchain with G-Cter in SUMO2). The WGR domain maps to 541-637; it reads SAHVLEKGGK…KNFTKYPKKF (97 aa). Thr593 is subject to Phosphothreonine. 2 positions are modified to N6-acetyllysine: Lys599 and Lys620. A PARP alpha-helical domain is found at 661–778; the sequence is KSKLPKAVQE…DIEVAYSLLR (118 aa). Residue Lys747 forms a Glycyl lysine isopeptide (Lys-Gly) (interchain with G-Cter in SUMO1); alternate linkage. A Glycyl lysine isopeptide (Lys-Gly) (interchain with G-Cter in SUMO2); alternate cross-link involves residue Lys747. Phosphoserine is present on residues Ser781 and Ser785. In terms of domain architecture, PARP catalytic spans 787–1013; that stretch reads DPIDVNYEKL…LKFNFKTSLW (227 aa). Residues 861–863, Gly870, Arg877, and Ser903 contribute to the NAD(+) site; that span reads HGS. Glu987 serves as the catalytic For poly [ADP-ribose] polymerase activity.

The protein belongs to the ARTD/PARP family. As to quaternary structure, homodimer; PARP-type zinc-fingers from separate PARP1 molecules form a dimer module that specifically recognizes DNA strand breaks. Heterodimer; heterodimerizes with PARP2. Interacts (via the PARP catalytic domain) with HPF1. Interacts with NMNAT1. Interacts with nucleosomes; with a preference for nucleosomes containing H2A.X. Interacts with APTX. Component of a base excision repair (BER) complex, containing at least XRCC1, PARP1, PARP2, POLB and LRIG3. Interacts with SRY. The SWAP complex consists of NPM1, NCL, PARP1 and SWAP70. Interacts with TIAM2. Interacts with PARP3; leading to activate PARP1 in absence of DNA. Interacts (when poly-ADP-ribosylated) with CHD1L (via macro domain). Interacts with the DNA polymerase alpha catalytic subunit POLA1; this interaction functions as part of the control of replication fork progression. Interacts with EEF1A1 and TXK. Interacts with RNF4. Interacts with RNF146. Interacts with ZNF423. Interacts with APLF. Interacts with SNAI1 (via zinc fingers); the interaction requires SNAI1 to be poly-ADP-ribosylated and non-phosphorylated (active) by GSK3B. Interacts (when poly-ADP-ribosylated) with PARP9. Interacts with NR4A3; activates PARP1 by improving acetylation of PARP1 and suppressing the interaction between PARP1 and SIRT1. Interacts (via catalytic domain) with PUM3; the interaction inhibits the poly-ADP-ribosylation activity of PARP1 and the degradation of PARP1 by CASP3 following genotoxic stress. Interacts with ZNF365. Interacts with RRP1B. Interacts with TIMELESS; the interaction is direct. Interacts with CGAS; leading to impede the formation of the PARP1-TIMELESS complex. Interacts with KHDC3L, the interaction is increased following the formation of DNA double-strand breaks. Interacts (when auto-poly-ADP-ribosylated) with XRCC1; leading to inhibit PARP1 ADP-ribosyltransferase activity. Interacts with SPINDOC; promoting PARP1 ADP-ribosyltransferase activity. Interacts with BANF1; leading to inhibit PARP1 ADP-ribosyltransferase activity in response to oxidative DNA damage. Interacts (when sumoylated and ubiquitinated) with VCP/p97; leading to its extraction from chromatin. Interacts with YARS1; promoting PARP1 ADP-ribosyltransferase activity. Interacts with PACMP micropeptide; Interacts with PACMP micropeptide; interaction. Interacts (when poly-ADP-ribosylated) with isoform 1 of MACROH2A1; MACROH2A1 specifically binds to poly-ADP-ribose chains and inhibits PARP1 activity, limiting the consumption of nuclear NAD(+). Interacts with CARM1; promoting recruitment to replication forks. Interacts with RECQL. Interacts with ZNF32; the interaction reshapes ZNF432 interacting proteins. Interacts with TPRN; TPRN interacts with a number of DNA damage response proteins, is recruited to sites of DNA damage and may play a role in DNA damage repair. In terms of assembly, interacts (when auto-poly-ADP-ribosylated) with AIFM1. In terms of processing, poly-ADP-ribosylated on serine, glutamate and aspartate residues by autocatalysis. Auto-ADP-ribosylation on serine takes place following interaction with HPF1. Auto poly-ADP-ribosylation on serine residues promotes its dissociation from chromatin. Poly-ADP-ribosylated by PARP2; poly-ADP-ribosylation mediates the recruitment of CHD1L to DNA damage sites. Mono-ADP-ribosylated at Lys-520 by SIRT6 in response to oxidative stress, promoting recruitment to double-strand breaks (DSBs) sites. S-nitrosylated, leading to inhibit transcription regulation activity. Post-translationally, phosphorylated at Thr-593 by PRKDC in response to DNA damage following virus infection, promoting its translocation to the cytosol. Phosphorylated by TXK. In terms of processing, proteolytically cleaved by caspase-3 (CASP3) and caspase-7 (CASP7) in response to apoptosis to generate the Poly [ADP-ribose] polymerase 1, processed N-terminus and Poly [ADP-ribose] polymerase 1, processed C-terminus forms. Sumoylated with SUMO1 or SUMO2 by PIAS4 following prolonged residence (trapping) to chromatin. Sumoylation promotes ubiquitination by RNF4 and removal from chromatin by VCP/p97. Post-translationally, ubiquitinated by RNF4 following sumoylation by PIAS4 in response to prolonged residence (trapping) to chromatin. Ubiquitination promotes removal from chromatin by VCP/p97.

The protein localises to the chromosome. It is found in the nucleus. It localises to the nucleolus. Its subcellular location is the cytoplasm. The protein resides in the cytosol. The catalysed reaction is NAD(+) + (ADP-D-ribosyl)n-acceptor = nicotinamide + (ADP-D-ribosyl)n+1-acceptor + H(+).. The enzyme catalyses L-seryl-[protein] + NAD(+) = O-(ADP-D-ribosyl)-L-seryl-[protein] + nicotinamide + H(+). It carries out the reaction L-aspartyl-[protein] + NAD(+) = 4-O-(ADP-D-ribosyl)-L-aspartyl-[protein] + nicotinamide. It catalyses the reaction L-glutamyl-[protein] + NAD(+) = 5-O-(ADP-D-ribosyl)-L-glutamyl-[protein] + nicotinamide. The catalysed reaction is L-tyrosyl-[protein] + NAD(+) = O-(ADP-D-ribosyl)-L-tyrosyl-[protein] + nicotinamide + H(+). The enzyme catalyses L-histidyl-[protein] + NAD(+) = N(tele)-(ADP-D-ribosyl)-L-histidyl-[protein] + nicotinamide + H(+). ADP-ribosyltransferase activity is regulated via an allosteric activation mechanism. In absence of activation signal, PARP1 is autoinhibited by the PARP alpha-helical domain (also named HD region), which prevents effective NAD(+)-binding. Activity is highly stimulated by signals, such as DNA strand breaks. Binding to damaged DNA unfolds the PARP alpha-helical domain, relieving autoinhibition. Poly-ADP-ribosyltransferase activity is tightly regulated and PARP1 is removed from damaged chromatin following initial poly-ADP-ribosylation of chromatin to avoid prolonged residence (trapping) that has cytotoxic consequences. A number of factors (VCP/p97) or post-translational modifications (auto-poly-ADP-ribosylation or ubiquitination) promote PARP1 removal from chromatin. In terms of biological role, poly-ADP-ribosyltransferase that mediates poly-ADP-ribosylation of proteins and plays a key role in DNA repair. Mediates glutamate, aspartate, serine, histidine or tyrosine ADP-ribosylation of proteins: the ADP-D-ribosyl group of NAD(+) is transferred to the acceptor carboxyl group of target residues and further ADP-ribosyl groups are transferred to the 2'-position of the terminal adenosine moiety, building up a polymer with an average chain length of 20-30 units. Serine ADP-ribosylation of proteins constitutes the primary form of ADP-ribosylation of proteins in response to DNA damage. Specificity for the different amino acids is conferred by interacting factors, such as HPF1 and NMNAT1. Following interaction with HPF1, catalyzes serine ADP-ribosylation of target proteins; HPF1 confers serine specificity by completing the PARP1 active site. Also catalyzes tyrosine ADP-ribosylation of target proteins following interaction with HPF1. Following interaction with NMNAT1, catalyzes glutamate and aspartate ADP-ribosylation of target proteins; NMNAT1 confers glutamate and aspartate specificity. PARP1 initiates the repair of DNA breaks: recognizes and binds DNA breaks within chromatin and recruits HPF1, licensing serine ADP-ribosylation of target proteins, such as histones (H2BS6ADPr and H3S10ADPr), thereby promoting decompaction of chromatin and the recruitment of repair factors leading to the reparation of DNA strand breaks. HPF1 initiates serine ADP-ribosylation but restricts the polymerase activity of PARP1 in order to limit the length of poly-ADP-ribose chains. In addition to base excision repair (BER) pathway, also involved in double-strand breaks (DSBs) repair: together with TIMELESS, accumulates at DNA damage sites and promotes homologous recombination repair by mediating poly-ADP-ribosylation. Mediates the poly-ADP-ribosylation of a number of proteins, including itself, APLF, CHFR and NFAT5. In addition to proteins, also able to ADP-ribosylate DNA: catalyzes ADP-ribosylation of DNA strand break termini containing terminal phosphates and a 2'-OH group in single- and double-stranded DNA, respectively. Required for PARP9 and DTX3L recruitment to DNA damage sites. PARP1-dependent PARP9-DTX3L-mediated ubiquitination promotes the rapid and specific recruitment of 53BP1/TP53BP1, UIMC1/RAP80, and BRCA1 to DNA damage sites. PARP1-mediated DNA repair in neurons plays a role in sleep: senses DNA damage in neurons and promotes sleep, facilitating efficient DNA repair. In addition to DNA repair, also involved in other processes, such as transcription regulation, programmed cell death, membrane repair, adipogenesis and innate immunity. Acts as a repressor of transcription: binds to nucleosomes and modulates chromatin structure in a manner similar to histone H1, thereby altering RNA polymerase II. Acts both as a positive and negative regulator of transcription elongation, depending on the context. Acts as a positive regulator of transcription elongation by mediating poly-ADP-ribosylation of NELFE, preventing RNA-binding activity of NELFE and relieving transcription pausing. Acts as a negative regulator of transcription elongation in response to DNA damage by catalyzing poly-ADP-ribosylation of CCNT1, disrupting the phase separation activity of CCNT1 and subsequent activation of CDK9. Involved in replication fork progression following interaction with CARM1: mediates poly-ADP-ribosylation at replication forks, slowing fork progression. Poly-ADP-ribose chains generated by PARP1 also play a role in poly-ADP-ribose-dependent cell death, a process named parthanatos. Also acts as a negative regulator of the cGAS-STING pathway. Acts by mediating poly-ADP-ribosylation of CGAS: PARP1 translocates into the cytosol following phosphorylation by PRKDC and catalyzes poly-ADP-ribosylation and inactivation of CGAS. Acts as a negative regulator of adipogenesis: catalyzes poly-ADP-ribosylation of histone H2B on 'Glu-35' (H2BE35ADPr) following interaction with NMNAT1, inhibiting phosphorylation of H2B at 'Ser-36' (H2BS36ph), thereby blocking expression of pro-adipogenetic genes. Involved in the synthesis of ATP in the nucleus, together with NMNAT1, PARG and NUDT5. Nuclear ATP generation is required for extensive chromatin remodeling events that are energy-consuming. Promotes AIFM1-mediated apoptosis. This form, which translocates into the cytoplasm following cleavage by caspase-3 (CASP3) and caspase-7 (CASP7) in response to apoptosis, is auto-poly-ADP-ribosylated and serves as a poly-ADP-ribose carrier to induce AIFM1-mediated apoptosis. Its function is as follows. This cleavage form irreversibly binds to DNA breaks and interferes with DNA repair, promoting DNA damage-induced apoptosis. The chain is Poly [ADP-ribose] polymerase 1 (PARP1) from Cricetulus griseus (Chinese hamster).